We begin with the raw amino-acid sequence, 555 residues long: Solute carrier family 22 member 2 (555 aa).

The Cytoplasmic portion of the chain corresponds to 1–22 (MPTTVDDVLEHGGEFHFFQKQM). Residues 23–43 (FFLLALLSATFAPIYVGIVFL) traverse the membrane as a helical segment. The Extracellular portion of the chain corresponds to 44–150 (GFTPDHRCRS…LVCANSWMLD (107 aa)). The N-linked (GlcNAc...) asparagine glycan is linked to asparagine 72. The helical transmembrane segment at 151–171 (LFQSSVNVGFFIGSMSIGYIA) threads the bilayer. The Cytoplasmic segment spans residues 172–177 (DRFGRK). The chain crosses the membrane as a helical span at residues 178–198 (LCLLTTVLINAAAGVLMAISP). At 199-208 (TYTWMLIFRL) the chain is on the extracellular side. A helical transmembrane segment spans residues 209–229 (IQGLVSKAGWLIGYILITEFV). Residues 230 to 238 (GRRYRRTVG) lie on the Cytoplasmic side of the membrane. A helical membrane pass occupies residues 239 to 259 (IFYQVAYTVGLLVLAGVAYAL). At 260–263 (PHWR) the chain is on the extracellular side. A helical transmembrane segment spans residues 264–284 (WLQFTVSLPNFFFLLYYWCIP). The Proline-rich sequence signature appears at 284–288 (PESPR). Over 285 to 348 (ESPRWLISQN…VRTPQIRKHT (64 aa)) the chain is Cytoplasmic. Residues 349–369 (MILMYNWFTSSVLYQGLIMHM) traverse the membrane as a helical segment. Over 370–375 (GLAGDN) the chain is Extracellular. The chain crosses the membrane as a helical span at residues 376-396 (IYLDFFYSALVEFPAAFMIIL). Topologically, residues 397–414 (TIDRIGRRYPWAASNMVA) are cytoplasmic. Residues 415-435 (GAACLASVFIPGDLQWLKIII) form a helical membrane-spanning segment. Topologically, residues 436 to 441 (SCLGRM) are extracellular. The helical transmembrane segment at 442–462 (GITMAYEIVCLVNAELYPTFI) threads the bilayer. The Cytoplasmic segment spans residues 463–464 (RN). A helical transmembrane segment spans residues 465–485 (LGVHICSSMCDIGGIITPFLV). Topologically, residues 486 to 494 (YRLTNIWLE) are extracellular. Residues 495 to 515 (LPLMVFGVLGLVAGGLVLLLP) form a helical membrane-spanning segment. Over 516–555 (ETKGKALPETIEEAENMQRPRKNKEKMIYLQVQKLDIPLN) the chain is Cytoplasmic.

Belongs to the major facilitator (TC 2.A.1) superfamily. Organic cation transporter (TC 2.A.1.19) family. In terms of processing, tyrosine phosphorylated by tyrosine-protein kinase YES1. Mainly expressed in kidney, in the cortex and medulla. Localized in testis, mostly to peritubular myoid cells and Leydig cells and also detected along the basal membrane of Sertoli cells. Expressed in brain, in neurons of the cerebral cortex and in various subcortical nuclei. In the brain, also detected in the dopaminergic regions of the substantia nigra. Expressed in tracheal and bronchial ciliated epithelium in the respiratory tract. Also detected in secretory phase endometrium, in scattered stromal cells. Expressed in spleen, placenta, small intestine and spinal cord. Weakly expressed in prostate, uterus and lung. As to expression, mainly expressed in kidney, bone marrow and testis. Expressed in colon, skeletal muscle, spinal cord, placenta and liver.

The protein localises to the basolateral cell membrane. It localises to the basal cell membrane. Its subcellular location is the apical cell membrane. The catalysed reaction is (R)-noradrenaline(out) = (R)-noradrenaline(in). The enzyme catalyses (R)-adrenaline(out) = (R)-adrenaline(in). It catalyses the reaction serotonin(out) = serotonin(in). It carries out the reaction dopamine(out) = dopamine(in). The catalysed reaction is histamine(out) = histamine(in). The enzyme catalyses thiamine(in) = thiamine(out). It catalyses the reaction creatinine(in) = creatinine(out). It carries out the reaction 1-methylnicotinamide(out) = 1-methylnicotinamide(in). The catalysed reaction is guanidine(out) = guanidine(in). The enzyme catalyses choline(out) = choline(in). It catalyses the reaction agmatine(out) = agmatine(in). It carries out the reaction putrescine(out) = putrescine(in). The catalysed reaction is spermidine(in) = spermidine(out). The enzyme catalyses tyramine(in) = tyramine(out). It catalyses the reaction L-histidyl-L-proline diketopiperazine(in) = L-histidyl-L-proline diketopiperazine(out). It carries out the reaction (R)-salsolinol(in) = (R)-salsolinol(out). The catalysed reaction is N-methyl-(R)-salsolinol(in) = N-methyl-(R)-salsolinol(out). The enzyme catalyses acetylcholine(in) = acetylcholine(out). It catalyses the reaction prostaglandin F2alpha(out) = prostaglandin F2alpha(in). It carries out the reaction prostaglandin E2(out) = prostaglandin E2(in). Tyrosine phosphorylation of the transporter leads to activation of the transport activity. TEA uptake is activated by tyrosine phosphorylation. Inhibited by cGMP, most likely through a cGMP-binding protein that interacts with OCT2. In terms of biological role, electrogenic voltage-dependent transporter that mediates the transport of a variety of organic cations such as endogenous bioactive amines, cationic drugs and xenobiotics. Functions as a Na(+)-independent, bidirectional uniporter. Cation cellular uptake or release is driven by the electrochemical potential, i.e. membrane potential and concentration gradient. However, may also engage electroneutral cation exchange when saturating concentrations of cation substrates are reached. Predominantly expressed at the basolateral membrane of hepatocytes and proximal tubules and involved in the uptake and disposition of cationic compounds by hepatic and renal clearance from the blood flow. Implicated in monoamine neurotransmitters uptake such as histamine, dopamine, adrenaline/epinephrine, noradrenaline/norepinephrine, serotonin and tyramine, thereby supporting a physiological role in the central nervous system by regulating interstitial concentrations of neurotransmitters. Also capable of transporting dopaminergic neuromodulators cyclo(his-pro), salsolinol and N-methyl-salsolinol, thereby involved in the maintenance of dopaminergic cell integrity in the central nervous system. Mediates the bidirectional transport of acetylcholine (ACh) at the apical membrane of ciliated cell in airway epithelium, thereby playing a role in luminal release of ACh from bronchial epithelium. Also transports guanidine and endogenous monoamines such as vitamin B1/thiamine, creatinine and N-1-methylnicotinamide (NMN). Mediates the uptake and efflux of quaternary ammonium compound choline. Mediates the bidirectional transport of polyamine agmatine and the uptake of polyamines putrescine and spermidine. Able to transport non-amine endogenous compounds such as prostaglandin E2 (PGE2) and prostaglandin F2-alpha (PGF2-alpha). Also involved in the uptake of xenobiotic 4-(4-(dimethylamino)styryl)-N-methylpyridinium (ASP). May contribute to regulate the transport of organic compounds in testis across the blood-testis-barrier. Functionally, in contrast with isoform 1, not able to transport guanidine, creatinine, cimetidine and metformin. This Homo sapiens (Human) protein is Solute carrier family 22 member 2.